We begin with the raw amino-acid sequence, 480 residues long: NADH-quinone oxidoreductase subunit N (480 aa).

The next 13 membrane-spanning stretches (helical) occupy residues 5 to 25 (NFLC…LFLY), 40 to 60 (IAIV…FTMY), 69 to 89 (ISSQ…FLVF), 110 to 130 (VIML…NFVM), 162 to 182 (YILT…FLYG), 204 to 224 (LGFV…PFHL), 237 to 257 (VTAY…IFVL), 266 to 286 (LIWN…GNLF), 296 to 316 (FFAF…IAGT), 324 to 344 (IFYT…IASV), 368 to 388 (AFVM…AGFF), 404 to 424 (ILVF…LLIV), and 450 to 470 (MVIC…YEYI).

It belongs to the complex I subunit 2 family. In terms of assembly, NDH-1 is composed of 14 different subunits. Subunits NuoA, H, J, K, L, M, N constitute the membrane sector of the complex.

Its subcellular location is the cell inner membrane. The enzyme catalyses a quinone + NADH + 5 H(+)(in) = a quinol + NAD(+) + 4 H(+)(out). NDH-1 shuttles electrons from NADH, via FMN and iron-sulfur (Fe-S) centers, to quinones in the respiratory chain. The immediate electron acceptor for the enzyme in this species is believed to be a menaquinone. Couples the redox reaction to proton translocation (for every two electrons transferred, four hydrogen ions are translocated across the cytoplasmic membrane), and thus conserves the redox energy in a proton gradient. The polypeptide is NADH-quinone oxidoreductase subunit N (Azobacteroides pseudotrichonymphae genomovar. CFP2).